The following is a 213-amino-acid chain: Pyrrolidone-carboxylate peptidase (213 aa).

Residues glutamate 78, cysteine 141, and histidine 165 contribute to the active site.

The protein belongs to the peptidase C15 family. Homotetramer.

The protein resides in the cytoplasm. It catalyses the reaction Release of an N-terminal pyroglutamyl group from a polypeptide, the second amino acid generally not being Pro.. Its function is as follows. Removes 5-oxoproline from various penultimate amino acid residues except L-proline. The protein is Pyrrolidone-carboxylate peptidase of Clostridium perfringens (strain 13 / Type A).